A 190-amino-acid polypeptide reads, in one-letter code: dCTP deaminase (190 aa).

Position 113-118 (113-118) interacts with dCTP; the sequence is KSTYAR. The Proton donor/acceptor role is filled by Glu139. The dCTP site is built by Gln158, Tyr172, Lys181, and Gln182.

It belongs to the dCTP deaminase family. As to quaternary structure, homotrimer.

The catalysed reaction is dCTP + H2O + H(+) = dUTP + NH4(+). It functions in the pathway pyrimidine metabolism; dUMP biosynthesis; dUMP from dCTP (dUTP route): step 1/2. Catalyzes the deamination of dCTP to dUTP. The polypeptide is dCTP deaminase (Chlamydia pneumoniae (Chlamydophila pneumoniae)).